A 532-amino-acid polypeptide reads, in one-letter code: GH3 domain-containing protein (532 aa).

The first 18 residues, 1 to 18, serve as a signal peptide directing secretion; it reads MLLLWLLLLLLLLVPLLA. The segment at 100 to 123 is disordered; sequence LTQTSHTQEQESEETLPSPASPQY. Residues Asn356 and Asn451 are each glycosylated (N-linked (GlcNAc...) asparagine).

This sequence belongs to the GH3 family. In terms of tissue distribution, highly expressed in mammary tissues from mature virgins and at day 13 of pregnancy, and at lower level during lactation. Expressed at intermediate level in liver. Expressed at lower level in kidney, heart and brain.

It is found in the endoplasmic reticulum. Its subcellular location is the nucleus envelope. The protein is GH3 domain-containing protein (Ghdc) of Mus musculus (Mouse).